Here is a 792-residue protein sequence, read N- to C-terminus: Phenylalanine--tRNA ligase beta subunit (792 aa).

In terms of domain architecture, tRNA-binding spans G39 to A147. The B5 domain occupies P400 to T475. 4 residues coordinate Mg(2+): D453, D459, E462, and E463. The 94-residue stretch at S698–R791 folds into the FDX-ACB domain.

This sequence belongs to the phenylalanyl-tRNA synthetase beta subunit family. Type 1 subfamily. Tetramer of two alpha and two beta subunits. Requires Mg(2+) as cofactor.

The protein resides in the cytoplasm. The enzyme catalyses tRNA(Phe) + L-phenylalanine + ATP = L-phenylalanyl-tRNA(Phe) + AMP + diphosphate + H(+). This Xanthomonas euvesicatoria pv. vesicatoria (strain 85-10) (Xanthomonas campestris pv. vesicatoria) protein is Phenylalanine--tRNA ligase beta subunit.